The chain runs to 194 residues: Inner membrane-spanning protein YciB (194 aa).

5 consecutive transmembrane segments (helical) span residues 3–23 (LFIEYFPLLIFFIINSIAGIY), 47–67 (IPAKQWIIFGLIVVFGGLTIY), 76–96 (WKVTIINAFFAAALLVSNTFF), 119–139 (LNLAWALFFLFCSGLNYYIAF), and 149–169 (FKVFGLTGLMFLFSITSILFL).

The protein belongs to the YciB family.

Its subcellular location is the cell inner membrane. Plays a role in cell envelope biogenesis, maintenance of cell envelope integrity and membrane homeostasis. The protein is Inner membrane-spanning protein YciB of Colwellia psychrerythraea (strain 34H / ATCC BAA-681) (Vibrio psychroerythus).